A 253-amino-acid chain; its full sequence is Trans-aconitate 2-methyltransferase (253 aa).

The protein belongs to the methyltransferase superfamily. Tam family.

It is found in the cytoplasm. The catalysed reaction is trans-aconitate + S-adenosyl-L-methionine = (E)-3-(methoxycarbonyl)pent-2-enedioate + S-adenosyl-L-homocysteine. In terms of biological role, catalyzes the S-adenosylmethionine monomethyl esterification of trans-aconitate. The protein is Trans-aconitate 2-methyltransferase of Azoarcus sp. (strain BH72).